We begin with the raw amino-acid sequence, 534 residues long: Calcium uptake protein 1 homolog, mitochondrial (534 aa).

The N-terminal 32 residues, 1 to 32 (MLHCSFLRVIPIKNASKRLIIVRSLTSAPAKT), are a transit peptide targeting the mitochondrion. Positions 131–150 (PEASQKEEVTESNGEVEEVK) are disordered. 3 consecutive EF-hand domains span residues 271 to 306 (TSHA…IMSQ), 338 to 359 (KDGK…LQHD), and 466 to 501 (LSDH…RMRR). Ca(2+) contacts are provided by aspartate 284, aspartate 286, asparagine 288, and glutamate 295.

This sequence belongs to the MICU1 family. MICU1 subfamily. Expressed at low levels in PLM touch receptor neurons, germ cells, epidermis, and muscles.

The protein localises to the mitochondrion intermembrane space. It is found in the mitochondrion inner membrane. In terms of biological role, calcium sensor of the mitochondrial calcium uniporter (mcu-1) channel, which senses calcium level via its EF-hand domains. At low calcium levels, micu-1 occludes the pore of the mcu-1 channel, preventing mitochondrial calcium uptake. At higher calcium levels, calcium-binding to micu-1 induces a conformational change that weakens mcu-1-micu-1 interactions and moves micu-1 away from the pore, allowing calcium permeation through the mcu-1 channel. Also required to protect against manganese toxicity by preventing manganese uptake by mcu-1. Modulates the activity of the mitochondrial calcium uniporter protein mcu-1 depending on the level of intracellular calcium in PLM touch receptor neurons following axonal injury. The protein is Calcium uptake protein 1 homolog, mitochondrial of Caenorhabditis elegans.